The following is a 102-amino-acid chain: Large ribosomal subunit protein bL21 (102 aa).

The protein belongs to the bacterial ribosomal protein bL21 family. In terms of assembly, part of the 50S ribosomal subunit. Contacts protein L20.

Its function is as follows. This protein binds to 23S rRNA in the presence of protein L20. This chain is Large ribosomal subunit protein bL21, found in Bacillus licheniformis (strain ATCC 14580 / DSM 13 / JCM 2505 / CCUG 7422 / NBRC 12200 / NCIMB 9375 / NCTC 10341 / NRRL NRS-1264 / Gibson 46).